Reading from the N-terminus, the 131-residue chain is Chromatin accessibility complex protein 1 (131 aa).

Ala-2 is subject to N-acetylalanine. Residues Ala-100–Ser-124 are a coiled coil. Position 102 is an N6-acetyllysine (Lys-102). Residues Glu-109–Ser-131 are disordered. Positions Arg-112–Ser-131 are enriched in acidic residues. The residue at position 124 (Ser-124) is a Phosphoserine.

As to quaternary structure, heterodimer with POLE3; binds to DNA. Component of the CHRAC ISWI chromatin remodeling complex at least composed of SMARCA5/SNF2H, BAZ1A/ACF1, CHRAC1 and POLE3; the complex preferentially binds DNA through the CHRAC1-POLE3 heterodimer and possesses ATP-dependent nucleosome-remodeling activity. Within the complex, the heterodimer with POLE3 interacts with SMARCA5/SNF2H; the interaction is direct and enhances nucleosome sliding activity by the SMARCA5/SNF2H and BAZ1A/ACF1 interaction. Within the complex, the heterodimer with POLE3 interacts with BAZ1A/ACF1; the interactions are direct. Expressed in heart, brain, placenta, lung, liver, skeletal muscle, kidney and pancreas.

It localises to the nucleus. In terms of biological role, forms a complex with DNA polymerase epsilon subunit POLE3 and binds naked DNA, which is then incorporated into chromatin, aided by the nucleosome remodeling activity of ISWI/SNF2H and ACF1. Does not enhance nucleosome sliding activity of the ACF-5 ISWI chromatin remodeling complex. The polypeptide is Chromatin accessibility complex protein 1 (CHRAC1) (Homo sapiens (Human)).